We begin with the raw amino-acid sequence, 407 residues long: Arginine biosynthesis bifunctional protein ArgJ (407 aa).

Residues T154, K180, T191, E278, N402, and S407 each coordinate substrate. Residue T191 is the Nucleophile of the active site.

The protein belongs to the ArgJ family. Heterotetramer of two alpha and two beta chains.

Its subcellular location is the cytoplasm. It catalyses the reaction N(2)-acetyl-L-ornithine + L-glutamate = N-acetyl-L-glutamate + L-ornithine. The catalysed reaction is L-glutamate + acetyl-CoA = N-acetyl-L-glutamate + CoA + H(+). Its pathway is amino-acid biosynthesis; L-arginine biosynthesis; L-ornithine and N-acetyl-L-glutamate from L-glutamate and N(2)-acetyl-L-ornithine (cyclic): step 1/1. It participates in amino-acid biosynthesis; L-arginine biosynthesis; N(2)-acetyl-L-ornithine from L-glutamate: step 1/4. Functionally, catalyzes two activities which are involved in the cyclic version of arginine biosynthesis: the synthesis of N-acetylglutamate from glutamate and acetyl-CoA as the acetyl donor, and of ornithine by transacetylation between N(2)-acetylornithine and glutamate. This chain is Arginine biosynthesis bifunctional protein ArgJ, found in Psychrobacter arcticus (strain DSM 17307 / VKM B-2377 / 273-4).